A 255-amino-acid chain; its full sequence is Triosephosphate isomerase (255 aa).

9-11 (NWK) contributes to the substrate binding site. Histidine 95 (electrophile) is an active-site residue. Glutamate 167 serves as the catalytic Proton acceptor. Substrate is bound by residues glycine 173, serine 212, and 233 to 234 (GG).

It belongs to the triosephosphate isomerase family. Homodimer.

Its subcellular location is the cytoplasm. It catalyses the reaction D-glyceraldehyde 3-phosphate = dihydroxyacetone phosphate. Its pathway is carbohydrate biosynthesis; gluconeogenesis. The protein operates within carbohydrate degradation; glycolysis; D-glyceraldehyde 3-phosphate from glycerone phosphate: step 1/1. Its function is as follows. Involved in the gluconeogenesis. Catalyzes stereospecifically the conversion of dihydroxyacetone phosphate (DHAP) to D-glyceraldehyde-3-phosphate (G3P). This is Triosephosphate isomerase from Erwinia tasmaniensis (strain DSM 17950 / CFBP 7177 / CIP 109463 / NCPPB 4357 / Et1/99).